The chain runs to 260 residues: Putative sgc region transcriptional regulator (260 aa).

Residues 5-61 (RPDRIKQMLHYLWQHRHLSTQQAMELFGYAEATVRRDFQYIVNQYPGMIRGHGCLDF) enclose the HTH deoR-type domain. The segment at residues 22–41 (LSTQQAMELFGYAEATVRRD) is a DNA-binding region (H-T-H motif).

Putative transcriptional regulator for the sgcREAQCX region. In Escherichia coli (strain K12), this protein is Putative sgc region transcriptional regulator (sgcR).